The sequence spans 124 residues: Small ribosomal subunit protein uS12 (124 aa).

3-methylthioaspartic acid is present on aspartate 89.

It belongs to the universal ribosomal protein uS12 family. Part of the 30S ribosomal subunit. Contacts proteins S8 and S17. May interact with IF1 in the 30S initiation complex.

Functionally, with S4 and S5 plays an important role in translational accuracy. Interacts with and stabilizes bases of the 16S rRNA that are involved in tRNA selection in the A site and with the mRNA backbone. Located at the interface of the 30S and 50S subunits, it traverses the body of the 30S subunit contacting proteins on the other side and probably holding the rRNA structure together. The combined cluster of proteins S8, S12 and S17 appears to hold together the shoulder and platform of the 30S subunit. In Pectobacterium atrosepticum (strain SCRI 1043 / ATCC BAA-672) (Erwinia carotovora subsp. atroseptica), this protein is Small ribosomal subunit protein uS12.